A 417-amino-acid polypeptide reads, in one-letter code: Serine hydroxymethyltransferase (417 aa).

(6S)-5,6,7,8-tetrahydrofolate-binding positions include Leu112 and Gly116–Leu118. Position 221 is an N6-(pyridoxal phosphate)lysine (Lys221). Glu247 serves as a coordination point for (6S)-5,6,7,8-tetrahydrofolate.

This sequence belongs to the SHMT family. As to quaternary structure, homodimer. Pyridoxal 5'-phosphate serves as cofactor.

The protein localises to the cytoplasm. It carries out the reaction (6R)-5,10-methylene-5,6,7,8-tetrahydrofolate + glycine + H2O = (6S)-5,6,7,8-tetrahydrofolate + L-serine. It functions in the pathway one-carbon metabolism; tetrahydrofolate interconversion. Its pathway is amino-acid biosynthesis; glycine biosynthesis; glycine from L-serine: step 1/1. Catalyzes the reversible interconversion of serine and glycine with tetrahydrofolate (THF) serving as the one-carbon carrier. This reaction serves as the major source of one-carbon groups required for the biosynthesis of purines, thymidylate, methionine, and other important biomolecules. Also exhibits THF-independent aldolase activity toward beta-hydroxyamino acids, producing glycine and aldehydes, via a retro-aldol mechanism. The chain is Serine hydroxymethyltransferase from Borreliella burgdorferi (strain ATCC 35210 / DSM 4680 / CIP 102532 / B31) (Borrelia burgdorferi).